The following is a 338-amino-acid chain: Glycerol-3-phosphate dehydrogenase [NAD(P)+] (338 aa).

The NADPH site is built by Ser-14, Tyr-15, His-35, and Lys-109. Sn-glycerol 3-phosphate contacts are provided by Lys-109, Gly-138, and Thr-140. Position 142 (Ala-142) interacts with NADPH. Sn-glycerol 3-phosphate-binding residues include Lys-194, Asp-247, Ser-257, Arg-258, and Asn-259. Lys-194 acts as the Proton acceptor in catalysis. Residue Arg-258 participates in NADPH binding. NADPH contacts are provided by Val-282 and Glu-284.

The protein belongs to the NAD-dependent glycerol-3-phosphate dehydrogenase family.

It is found in the cytoplasm. It carries out the reaction sn-glycerol 3-phosphate + NAD(+) = dihydroxyacetone phosphate + NADH + H(+). The enzyme catalyses sn-glycerol 3-phosphate + NADP(+) = dihydroxyacetone phosphate + NADPH + H(+). Its pathway is membrane lipid metabolism; glycerophospholipid metabolism. Its function is as follows. Catalyzes the reduction of the glycolytic intermediate dihydroxyacetone phosphate (DHAP) to sn-glycerol 3-phosphate (G3P), the key precursor for phospholipid synthesis. The chain is Glycerol-3-phosphate dehydrogenase [NAD(P)+] from Shewanella baltica (strain OS185).